Here is a 483-residue protein sequence, read N- to C-terminus: Threonine synthase-like 2 (483 aa).

Lysine 113 carries the post-translational modification N6-(pyridoxal phosphate)lysine.

It belongs to the threonine synthase family. Pyridoxal 5'-phosphate is required as a cofactor.

Acts as a catabolic phospho-lyase on both gamma- and beta-phosphorylated substrates. Degrades O-phospho-threonine (PThr) to alpha-ketobutyrate, ammonia and phosphate. Also degrades O-phospho-homoserine (PHS), but this is not its physiological substrate. This Mus musculus (Mouse) protein is Threonine synthase-like 2 (Thnsl2).